We begin with the raw amino-acid sequence, 228 residues long: Aquaporin Z (228 aa).

A run of 5 helical transmembrane segments spans residues 1-21 (MLNKLSAEFFGTFWLVFGGCG), 46-66 (TVLTMAYAVGGISGGHFNPAV), 82-102 (IPYWVAQVLGAIATAAILYVI), 129-149 (MMAGLLIEIILTAFFIIIILG), and 154-174 (LAPAGFAPIAIGFGLTLIHLV). The short motif at 63–65 (NPA) is the NPA 1 element. The NPA 2 motif lies at 184 to 186 (NPA). The chain crosses the membrane as a helical span at residues 205–225 (LFWVAPLVGAVIGAIIWKGLL).

The protein belongs to the MIP/aquaporin (TC 1.A.8) family. As to quaternary structure, homotetramer.

It is found in the cell inner membrane. The catalysed reaction is H2O(in) = H2O(out). Channel that permits osmotically driven movement of water in both directions. It is involved in the osmoregulation and in the maintenance of cell turgor during volume expansion in rapidly growing cells. It mediates rapid entry or exit of water in response to abrupt changes in osmolarity. The chain is Aquaporin Z from Brucella suis biovar 1 (strain 1330).